A 114-amino-acid chain; its full sequence is T cell receptor alpha variable 12-3 (114 aa).

A signal peptide spans 1–21 (MMKSLRVLLVILWLQLSWVWS). The 91-residue stretch at 24–114 (KEVEQDPGPL…DSATYLCAMS (91 aa)) folds into the Ig-like domain. An N-linked (GlcNAc...) asparagine glycan is attached at N44. C45 and C111 are joined by a disulfide.

In terms of assembly, alpha-beta TR is a heterodimer composed of an alpha and beta chain; disulfide-linked. The alpha-beta TR is associated with the transmembrane signaling CD3 coreceptor proteins to form the TR-CD3 (TcR or TCR). The assembly of alpha-beta TR heterodimers with CD3 occurs in the endoplasmic reticulum where a single alpha-beta TR heterodimer associates with one CD3D-CD3E heterodimer, one CD3G-CD3E heterodimer and one CD247 homodimer forming a stable octameric structure. CD3D-CD3E and CD3G-CD3E heterodimers preferentially associate with TR alpha and TR beta chains, respectively. The association of the CD247 homodimer is the last step of TcR assembly in the endoplasmic reticulum and is required for transport to the cell surface.

The protein resides in the cell membrane. Its function is as follows. V region of the variable domain of T cell receptor (TR) alpha chain that participates in the antigen recognition. Alpha-beta T cell receptors are antigen specific receptors which are essential to the immune response and are present on the cell surface of T lymphocytes. Recognize peptide-major histocompatibility (MH) (pMH) complexes that are displayed by antigen presenting cells (APC), a prerequisite for efficient T cell adaptive immunity against pathogens. Binding of alpha-beta TR to pMH complex initiates TR-CD3 clustering on the cell surface and intracellular activation of LCK that phosphorylates the ITAM motifs of CD3G, CD3D, CD3E and CD247 enabling the recruitment of ZAP70. In turn ZAP70 phosphorylates LAT, which recruits numerous signaling molecules to form the LAT signalosome. The LAT signalosome propagates signal branching to three major signaling pathways, the calcium, the mitogen-activated protein kinase (MAPK) kinase and the nuclear factor NF-kappa-B (NF-kB) pathways, leading to the mobilization of transcription factors that are critical for gene expression and essential for T cell growth and differentiation. The T cell repertoire is generated in the thymus, by V-(D)-J rearrangement. This repertoire is then shaped by intrathymic selection events to generate a peripheral T cell pool of self-MH restricted, non-autoaggressive T cells. Post-thymic interaction of alpha-beta TR with the pMH complexes shapes TR structural and functional avidity. The sequence is that of T cell receptor alpha variable 12-3 from Homo sapiens (Human).